Here is a 164-residue protein sequence, read N- to C-terminus: Siroheme decarboxylase alpha subunit (164 aa).

Belongs to the Ahb/Nir family. In terms of assembly, forms a heterodimer composed of AhbA and AhbB.

It carries out the reaction siroheme + 2 H(+) = 12,18-didecarboxysiroheme + 2 CO2. The protein operates within porphyrin-containing compound metabolism; protoheme biosynthesis. In terms of biological role, involved in siroheme-dependent heme b biosynthesis. Catalyzes the decarboxylation of siroheme into didecarboxysiroheme. This is Siroheme decarboxylase alpha subunit from Oleidesulfovibrio alaskensis (strain ATCC BAA-1058 / DSM 17464 / G20) (Desulfovibrio alaskensis).